The chain runs to 268 residues: Fc receptor-like protein 6 (268 aa).

A signal peptide spans 1–16 (MLLWMVLLLCESMAEA). The Extracellular segment spans residues 17-215 (QELFPNPELT…TAWIKSNMLP (199 aa)). Residues 114–194 (PVLTLQHEAT…AKNNISREIS (81 aa)) form the Ig-like C2-type domain. Cysteine 135 and cysteine 183 are oxidised to a cystine. N-linked (GlcNAc...) asparagine glycosylation is found at asparagine 180 and asparagine 188. A helical membrane pass occupies residues 216 to 236 (IWLPASLLGGMVIAAVVLMYF). The Cytoplasmic portion of the chain corresponds to 237–268 (FKPCKKHARPETPTLKEPDSFLYVSVDNQRYK).

As to quaternary structure, interacts with class II MHC.

The protein localises to the cell membrane. Acts as a MHC class II receptor. When stimulated on its own, does not play a role in cytokine production or the release of cytotoxic granules by NK cells and cytotoxic CD8(+) T cells. Does not act as an Fc receptor. The polypeptide is Fc receptor-like protein 6 (Fcrl6) (Mus musculus (Mouse)).